Here is a 75-residue protein sequence, read N- to C-terminus: Caerin-1.1 (75 aa).

The first 22 residues, 1-22, serve as a signal peptide directing secretion; it reads MASLKKSLFLVLLLGFVSVSIC. A propeptide spanning residues 23 to 49 is cleaved from the precursor; sequence EEEKRQEDEDEHEEEGESQEEGSEEKR. Residues 24-49 form a disordered region; the sequence is EEKRQEDEDEHEEEGESQEEGSEEKR. Residues 30-45 are compositionally biased toward acidic residues; the sequence is DEDEHEEEGESQEEGS. Leu-74 carries the leucine amide modification.

This sequence belongs to the frog skin active peptide (FSAP) family. Caerin subfamily. The major product is Caerin-1.1; in addition, different peptides are produced that are missing some amino acid residues at the N-terminus or C-terminus. Caerin-1.1.1 and Caerin-1.1.4 are inactive. As to expression, expressed by the skin parotoid and/or rostral glands.

It is found in the secreted. Its function is as follows. Antimicrobial peptide with antibacterial and antiviral activities. Adopts an alpha helical conformation which can disrupt bacterial membranes. Inhibits the formation of NO by neuronal nitric oxide synthase (nNOS) at micromolar concentrations. Acts by a non-competitive mechanism, probably by binding to calcium/calmodulin and as a consequence blocking calmodulin attachment to nNOS. Is inactive. The polypeptide is Caerin-1.1 (Ranoidea caerulea (Green tree frog)).